A 165-amino-acid chain; its full sequence is uncharacterized protein (165 aa).

In terms of domain architecture, Macro spans 1 to 165 (MDIKVVKGSI…EAWEKVLGLR (165 aa)).

This is an uncharacterized protein from Aquifex aeolicus (strain VF5).